Consider the following 111-residue polypeptide: Cell cycle protein GpsB (111 aa).

Positions 38-72 (IKDYEAFHKEFDQLKQQNARLKRELEEQKVAATQV) form a coiled coil.

It belongs to the GpsB family. As to quaternary structure, forms polymers through the coiled coil domains. Interacts with PBP1, MreC and EzrA.

Its subcellular location is the cytoplasm. Functionally, divisome component that associates with the complex late in its assembly, after the Z-ring is formed, and is dependent on DivIC and PBP2B for its recruitment to the divisome. Together with EzrA, is a key component of the system that regulates PBP1 localization during cell cycle progression. Its main role could be the removal of PBP1 from the cell pole after pole maturation is completed. Also contributes to the recruitment of PBP1 to the division complex. Not essential for septum formation. This chain is Cell cycle protein GpsB, found in Bacillus mycoides (strain KBAB4) (Bacillus weihenstephanensis).